The following is a 368-amino-acid chain: Alanine racemase (368 aa).

Lys-40 functions as the Proton acceptor; specific for D-alanine in the catalytic mechanism. Position 40 is an N6-(pyridoxal phosphate)lysine (Lys-40). Arg-136 contributes to the substrate binding site. Tyr-263 (proton acceptor; specific for L-alanine) is an active-site residue. Residue Met-310 participates in substrate binding.

The protein belongs to the alanine racemase family. It depends on pyridoxal 5'-phosphate as a cofactor.

It carries out the reaction L-alanine = D-alanine. The protein operates within amino-acid biosynthesis; D-alanine biosynthesis; D-alanine from L-alanine: step 1/1. In terms of biological role, catalyzes the interconversion of L-alanine and D-alanine. May also act on other amino acids. The polypeptide is Alanine racemase (alr) (Streptococcus uberis (strain ATCC BAA-854 / 0140J)).